The chain runs to 636 residues: Chaperone protein DnaK (636 aa).

At Thr203 the chain carries Phosphothreonine; by autocatalysis. The interval 602-636 (VYGKQQEGAPAQEEPSAEGKKADDEGTVEGEFREV) is disordered. The segment covering 618 to 636 (AEGKKADDEGTVEGEFREV) has biased composition (basic and acidic residues).

Belongs to the heat shock protein 70 family.

Acts as a chaperone. This chain is Chaperone protein DnaK, found in Dehalococcoides mccartyi (strain ATCC BAA-2100 / JCM 16839 / KCTC 5957 / BAV1).